A 581-amino-acid chain; its full sequence is A-type ATP synthase subunit A (581 aa).

234–241 (GPFGSGKT) provides a ligand contact to ATP.

Belongs to the ATPase alpha/beta chains family. In terms of assembly, has multiple subunits with at least A(3), B(3), C, D, E, F, H, I and proteolipid K(x).

The protein localises to the cell membrane. The catalysed reaction is ATP + H2O + 4 H(+)(in) = ADP + phosphate + 5 H(+)(out). Component of the A-type ATP synthase that produces ATP from ADP in the presence of a proton gradient across the membrane. The A chain is the catalytic subunit. The protein is A-type ATP synthase subunit A of Archaeoglobus fulgidus (strain ATCC 49558 / DSM 4304 / JCM 9628 / NBRC 100126 / VC-16).